A 435-amino-acid polypeptide reads, in one-letter code: Arginine biosynthesis bifunctional protein ArgJ, mitochondrial (435 aa).

Thr-167, Lys-193, Thr-204, Glu-291, Asn-430, and Thr-435 together coordinate substrate. Residue Thr-204 is the Nucleophile of the active site.

The protein belongs to the ArgJ family. As to quaternary structure, heterodimer of an alpha and a beta chain. In terms of processing, the alpha and beta chains are autoproteolytically processed from a single precursor protein within the mitochondrion.

It is found in the mitochondrion matrix. The catalysed reaction is N(2)-acetyl-L-ornithine + L-glutamate = N-acetyl-L-glutamate + L-ornithine. The enzyme catalyses L-glutamate + acetyl-CoA = N-acetyl-L-glutamate + CoA + H(+). It functions in the pathway amino-acid biosynthesis; L-arginine biosynthesis; L-ornithine and N-acetyl-L-glutamate from L-glutamate and N(2)-acetyl-L-ornithine (cyclic): step 1/1. The protein operates within amino-acid biosynthesis; L-arginine biosynthesis; N(2)-acetyl-L-ornithine from L-glutamate: step 1/4. In terms of biological role, catalyzes two activities which are involved in the cyclic version of arginine biosynthesis: the synthesis of acetylglutamate from glutamate and acetyl-CoA, and of ornithine by transacetylation between acetylornithine and glutamate. The sequence is that of Arginine biosynthesis bifunctional protein ArgJ, mitochondrial from Heterostelium pallidum (strain ATCC 26659 / Pp 5 / PN500) (Cellular slime mold).